We begin with the raw amino-acid sequence, 589 residues long: MPTVSVKRDLLFQALGRTYTDEEFDELCFEFGLELDEITSEKQIISKEQGHGKAQGASDVVLYKIDVPANRYDLLCLEGLARGLQVFKERIKAPVYKRVMPKGDIQKLVITEETAKVRPFAVAAVLRNIKFTKDRYDSFIELQEKLHQNICRKRALVAIGTHDLDTLSGPFTYTAKRPSDIKFKPLNKTKEYTACELMNIYKTDNHLKHYLHIIESKPLYPVIYDSNGVVLSMPPIINGNHSKITVNTRNIFIECTGTDFTKAKIVLDIIVTMFSEHCENQFTVEAVEVVSPNGKSSTFPELPYRKEMVRADLINKKVGIRETPANLAKLLTRMCLKSEVIGDGNQIEVEIPPTRADVIHACDIVEDAAIAYGYNNIQMTLPKTYTIANQFPLNKLTELLRLDMAAAGFTEALTFALCSQEDIADKLGLDISATKAVHISNPKTAEFQVARTTLLPGLLKTIAANRKMPLPLKLFEISDVVVKDSGKDVGAKNYRHLCAVYYNKTPGFEIIHGLLDRIMQLLDVPPGEESGGYMIKASAGSAFFPGRCAEIFVGGQSIGKLGVLHPDVITKFELTMPCSSLEINIEPFL.

Residues 302–379 (LPYRKEMVRA…IAYGYNNIQM (78 aa)) enclose the B5 domain. Residues aspartate 357, aspartate 363, glutamate 366, and aspartate 367 each coordinate Mg(2+).

It belongs to the phenylalanyl-tRNA synthetase beta subunit family. Type 2 subfamily. Heterotetramer; dimer of two heterodimers formed by FARSA and FARSB. It depends on Mg(2+) as a cofactor.

Its subcellular location is the cytoplasm. It catalyses the reaction tRNA(Phe) + L-phenylalanine + ATP = L-phenylalanyl-tRNA(Phe) + AMP + diphosphate + H(+). The protein is Phenylalanine--tRNA ligase beta subunit (Farsb) of Mus musculus (Mouse).